The following is a 396-amino-acid chain: Elongation factor Tu (396 aa).

The region spanning 10–206 (KPHVNIGTIG…AVDEYIPDPV (197 aa)) is the tr-type G domain. Positions 19–26 (GHVDHGKT) are G1. 19 to 26 (GHVDHGKT) provides a ligand contact to GTP. Thr26 is a Mg(2+) binding site. The interval 62–66 (GITIN) is G2. Residues 83–86 (DAPG) form a G3 region. Residues 83–87 (DAPGH) and 138–141 (NKSD) each bind GTP. Positions 138–141 (NKSD) are G4. The segment at 176–178 (SGL) is G5.

This sequence belongs to the TRAFAC class translation factor GTPase superfamily. Classic translation factor GTPase family. EF-Tu/EF-1A subfamily. Monomer.

It is found in the cytoplasm. The enzyme catalyses GTP + H2O = GDP + phosphate + H(+). Its function is as follows. GTP hydrolase that promotes the GTP-dependent binding of aminoacyl-tRNA to the A-site of ribosomes during protein biosynthesis. This chain is Elongation factor Tu, found in Micrococcus luteus (strain ATCC 4698 / DSM 20030 / JCM 1464 / CCM 169 / CCUG 5858 / IAM 1056 / NBRC 3333 / NCIMB 9278 / NCTC 2665 / VKM Ac-2230) (Micrococcus lysodeikticus).